Consider the following 464-residue polypeptide: Mannose-1-phosphate guanylyltransferase (464 aa).

Belongs to the mannose-6-phosphate isomerase type 2 family.

The catalysed reaction is alpha-D-mannose 1-phosphate + GTP + H(+) = GDP-alpha-D-mannose + diphosphate. It functions in the pathway nucleotide-sugar biosynthesis; GDP-alpha-D-mannose biosynthesis; GDP-alpha-D-mannose from alpha-D-mannose 1-phosphate (GTP route): step 1/1. The protein operates within bacterial outer membrane biogenesis; LPS O-antigen biosynthesis. In terms of biological role, involved in GDP-mannose biosynthesis which serves as the activated sugar nucleotide precursor for mannose residues in cell surface polysaccharides. This enzyme participates in synthesis of the LPS O7 antigen. This is Mannose-1-phosphate guanylyltransferase (manC) from Escherichia coli.